The chain runs to 91 residues: Uteroglobin (91 aa).

The signal sequence occupies residues 1–21 (MKLTIAIVLVTLTLFCRPAST).

Belongs to the secretoglobin family. Antiparallel homodimer; disulfide-linked. Interaction with LMBR1L is controversial.

It is found in the secreted. In terms of biological role, binds phosphatidylcholine, phosphatidylinositol, polychlorinated biphenyls (PCB) and weakly progesterone, potent inhibitor of phospholipase A2. The sequence is that of Uteroglobin (SCGB1A1) from Bos taurus (Bovine).